A 144-amino-acid polypeptide reads, in one-letter code: Urease accessory protein UreE (144 aa).

Belongs to the UreE family.

It is found in the cytoplasm. In terms of biological role, involved in urease metallocenter assembly. Binds nickel. Probably functions as a nickel donor during metallocenter assembly. The protein is Urease accessory protein UreE of Thermosynechococcus vestitus (strain NIES-2133 / IAM M-273 / BP-1).